Here is a 282-residue protein sequence, read N- to C-terminus: tRNA U34 carboxymethyltransferase (282 aa).

Residues Lys-54, Trp-68, Lys-73, Gly-92, 114 to 116 (DPS), Tyr-161, and Arg-276 contribute to the carboxy-S-adenosyl-L-methionine site.

This sequence belongs to the class I-like SAM-binding methyltransferase superfamily. CmoB family. In terms of assembly, homotetramer.

The catalysed reaction is carboxy-S-adenosyl-L-methionine + 5-hydroxyuridine(34) in tRNA = 5-carboxymethoxyuridine(34) in tRNA + S-adenosyl-L-homocysteine + H(+). Its function is as follows. Catalyzes carboxymethyl transfer from carboxy-S-adenosyl-L-methionine (Cx-SAM) to 5-hydroxyuridine (ho5U) to form 5-carboxymethoxyuridine (cmo5U) at position 34 in tRNAs. The sequence is that of tRNA U34 carboxymethyltransferase from Campylobacter fetus subsp. fetus (strain 82-40).